A 338-amino-acid chain; its full sequence is Protein RecA (338 aa).

Position 68–75 (68–75 (GPESSGKT)) interacts with ATP.

Belongs to the RecA family.

It localises to the cytoplasm. Functionally, can catalyze the hydrolysis of ATP in the presence of single-stranded DNA, the ATP-dependent uptake of single-stranded DNA by duplex DNA, and the ATP-dependent hybridization of homologous single-stranded DNAs. It interacts with LexA causing its activation and leading to its autocatalytic cleavage. The protein is Protein RecA of Citrifermentans bemidjiense (strain ATCC BAA-1014 / DSM 16622 / JCM 12645 / Bem) (Geobacter bemidjiensis).